Consider the following 482-residue polypeptide: Glucose starvation modulator protein 1 (482 aa).

The segment at residues 20 to 48 is a DNA-binding region (zn(2)-C6 fungal-type); the sequence is CVFCHEKHLQCDVGRPCQNCEKRNIGESC. The PAS domain occupies 350 to 422; it reads LLEYENMSKM…KLFNEYLAFS (73 aa).

The protein belongs to the ERT1/acuK family.

The protein resides in the nucleus. Transcription factor which regulates nonfermentable carbon utilization. In Eremothecium gossypii (strain ATCC 10895 / CBS 109.51 / FGSC 9923 / NRRL Y-1056) (Yeast), this protein is Glucose starvation modulator protein 1 (GSM1).